Here is a 510-residue protein sequence, read N- to C-terminus: Hydroperoxide bicyclase CYP5164A3, mitochondrial (510 aa).

Residues 1–31 constitute a mitochondrion transit peptide; the sequence is MQRVGAASPTCSSLQAPAAAPPILTISPHHR. A heme-binding site is contributed by Cys452.

Belongs to the cytochrome P450 family. Heme is required as a cofactor.

Its subcellular location is the mitochondrion. The catalysed reaction is (13S)-hydroperoxy-(9Z,11E,15Z)-octadecatrienoate = plasmodiophorol A. It catalyses the reaction (13S)-hydroperoxy-(9Z,11E,15Z)-octadecatrienoate = plasmodiophorol B. It carries out the reaction (13S)-hydroperoxy-(9Z,11E,15Z)-octadecatrienoate = ectocarpin A + H2O. The enzyme catalyses (15S)-hydroperoxy-(5Z,8Z,11Z,13E,17Z)-eicosapentaenoate = ectocarpin B + H2O. The catalysed reaction is (15S)-hydroperoxy-(5Z,8Z,11Z,13E,17Z)-eicosapentaenoate = ectocarpin C. It catalyses the reaction (15S)-hydroperoxy-(5Z,8Z,11Z,13E,17Z)-eicosapentaenoate + H2O = ectocarpin D. It carries out the reaction (15S)-hydroperoxy-(5Z,8Z,11Z,13E,17Z)-eicosapentaenoate = 14-oxo-15-hydroxy-(5Z,8Z,11Z,17Z)-eicosatetraenoate. It functions in the pathway lipid metabolism; oxylipin biosynthesis. Functionally, cytochrome P450 hydroperoxide bicyclase involved in the metabolism of oxylipins 'ectocarpins' natural products, such as hybridalactone, ecklonilactones and derivatives. Isomerizes the hydroperoxides into epoxyalcohols via epoxyallylic radical. Can use alpha-linolenic acid 13(S)-hydroperoxide (13-HPOTE) and eicosapentaenoic acid 15(S)-hydroperoxide (15-HPEPE) as preferred substrate to produce corresponding heterobicyclic oxylipins, such as plasmodiophorol A (6-oxabicyclo[3.1.0]hexane), plasmodiophorol B (2-oxabicyclo[2.2.1]heptane) and plasmodiophorol C (4-hydroxymethyl-1,2-dihydroxycyclopentane) as well as ectocarpin A (3-propenyl-6-oxabicyclo[3.1.0]hexane) formed at about 15:3:3:1 ratio for 13-HPOTE, and analogous to plasmodiophorols A and B including ectocarpin B (3-[(1'E)-propenyl]-6-oxabicyclo[3.1.0]hexane), ectocarpin C, 14-oxo-15-hydroxy-5,8,11,17-eicosate-traenoic acid and ectocarpin D for 15-HPEPE. Barely able to use linoleic acid 13-hydroperoxide (13-HPODE), linoleic acid 9-hydroperoxide (9-HPODE), eicosapentaenoic acid 15-hydroperoxide (15-HPEPE), and alpha-linolenic acid 9-hydroperoxide (9-HPOTE) as substrates. The protein is Hydroperoxide bicyclase CYP5164A3, mitochondrial of Ectocarpus siliculosus (Brown alga).